A 294-amino-acid chain; its full sequence is Nucleotide-binding protein LVIS_0651 (294 aa).

12–19 (GMSGAGKT) serves as a coordination point for ATP. 62 to 65 (DLRS) provides a ligand contact to GTP.

The protein belongs to the RapZ-like family.

Functionally, displays ATPase and GTPase activities. In Levilactobacillus brevis (strain ATCC 367 / BCRC 12310 / CIP 105137 / JCM 1170 / LMG 11437 / NCIMB 947 / NCTC 947) (Lactobacillus brevis), this protein is Nucleotide-binding protein LVIS_0651.